A 1005-amino-acid chain; its full sequence is Mediator of RNA polymerase II transcription subunit 24 (1005 aa).

Belongs to the Mediator complex subunit 24 family. Component of the Mediator complex.

The protein resides in the nucleus. In terms of biological role, component of the Mediator complex, a coactivator involved in the regulated transcription of nearly all RNA polymerase II-dependent genes. Mediator functions as a bridge to convey information from gene-specific regulatory proteins to the basal RNA polymerase II transcription machinery. Mediator is recruited to promoters by direct interactions with regulatory proteins and serves as a scaffold for the assembly of a functional preinitiation complex with RNA polymerase II and the general transcription factors. This Aedes aegypti (Yellowfever mosquito) protein is Mediator of RNA polymerase II transcription subunit 24 (MED24).